A 315-amino-acid polypeptide reads, in one-letter code: Cytoplasmic dynein intermediate light chain DYN3 (315 aa).

The protein belongs to the dynein light intermediate chain DYN3 family. In terms of assembly, the cytoplasmic dynein is composed of at least two heavy chains and a number of intermediate and light chains.

It is found in the cytoplasm. Its subcellular location is the cytoskeleton. Component of the cytoplasmic dynein which acts as a motor for the intracellular retrograde motility of vesicles and organelles along microtubules. May play an important role in the proper orientation of the mitotic spindle into the budding daughter cell yeast. Probably required for normal progression of the cell cycle. This Candida glabrata (strain ATCC 2001 / BCRC 20586 / JCM 3761 / NBRC 0622 / NRRL Y-65 / CBS 138) (Yeast) protein is Cytoplasmic dynein intermediate light chain DYN3 (DYN3).